A 218-amino-acid polypeptide reads, in one-letter code: Protein-methionine-sulfoxide reductase heme-binding subunit MsrQ (218 aa).

The next 5 membrane-spanning stretches (helical) occupy residues 14 to 34 (LVHA…WQVW), 60 to 80 (FLLI…AVVI), 86 to 106 (LGLY…TLDL), 121 to 141 (PYIT…ITST), and 155 to 175 (LHTL…WLVK).

Belongs to the MsrQ family. As to quaternary structure, heterodimer of a catalytic subunit (MsrP) and a heme-binding subunit (MsrQ). It depends on FMN as a cofactor. The cofactor is heme b.

The protein resides in the cell inner membrane. In terms of biological role, part of the MsrPQ system that repairs oxidized periplasmic proteins containing methionine sulfoxide residues (Met-O), using respiratory chain electrons. Thus protects these proteins from oxidative-stress damage caused by reactive species of oxygen and chlorine generated by the host defense mechanisms. MsrPQ is essential for the maintenance of envelope integrity under bleach stress, rescuing a wide series of structurally unrelated periplasmic proteins from methionine oxidation. MsrQ provides electrons for reduction to the reductase catalytic subunit MsrP, using the quinone pool of the respiratory chain. This is Protein-methionine-sulfoxide reductase heme-binding subunit MsrQ from Xanthomonas euvesicatoria pv. vesicatoria (strain 85-10) (Xanthomonas campestris pv. vesicatoria).